Here is a 179-residue protein sequence, read N- to C-terminus: Segregation and condensation protein B (179 aa).

This sequence belongs to the ScpB family. In terms of assembly, homodimer. Homodimerization may be required to stabilize the binding of ScpA to the Smc head domains. Component of a cohesin-like complex composed of ScpA, ScpB and the Smc homodimer, in which ScpA and ScpB bind to the head domain of Smc. The presence of the three proteins is required for the association of the complex with DNA.

Its subcellular location is the cytoplasm. Its function is as follows. Participates in chromosomal partition during cell division. May act via the formation of a condensin-like complex containing Smc and ScpA that pull DNA away from mid-cell into both cell halves. This is Segregation and condensation protein B from Clostridioides difficile (strain 630) (Peptoclostridium difficile).